The chain runs to 118 residues: Non-specific lipid-transfer protein (118 aa).

Residues 1–27 (MGVSKVAIAVAVMLMVVVINHPAVVEG) form the signal peptide. 4 disulfide bridges follow: cysteine 30–cysteine 75, cysteine 40–cysteine 54, cysteine 55–cysteine 100, and cysteine 77–cysteine 114.

The protein belongs to the plant LTP family. Disulfide bonds.

In terms of biological role, plant non-specific lipid-transfer proteins transfer phospholipids as well as galactolipids across membranes. May play a role in wax or cutin deposition in the cell walls of expanding epidermal cells and certain secretory tissues. This chain is Non-specific lipid-transfer protein, found in Apium graveolens (Celery).